A 289-amino-acid chain; its full sequence is uncharacterized protein (289 aa).

An HTH tetR-type domain is found at 2-62 (NEKKERIIKT…SACEYYIGMS (61 aa)). Residues 25-44 (TIQEIASECGISKGAFYLHF) constitute a DNA-binding region (H-T-H motif).

This is an uncharacterized protein from Bacillus subtilis (strain 168).